We begin with the raw amino-acid sequence, 619 residues long: Probable transporter mch1 (619 aa).

Transmembrane regions (helical) follow at residues 88-108, 120-140, 147-167, 184-204, 219-239, 261-281, 377-397, 428-448, 480-500, 515-535, 541-561, and 589-609; these read VISCLGAGSITAFSLYGPLFL, AVSIAAEISMYLPVPLFGYLC, PLALLSGLVFGGGYLLAAFAY, VMVVAFVAIGTATSCMYLAAV, IMLAVPIAGFGLSGMWQSQVA, FLFLALFLFCLGVIGTFGLRI, TMWWLAVGFFLVTGPGEAYIN, IIALTSTIARLLTGSLSDFFA, LAFLLPSALLLSLGYLLLSSP, LIGLGYGSAFSLVPIIISVVW, GTNWGIVAMVPAAGAAMWGVI, and FWAVGCTLSVWVAVVAWILAW.

It belongs to the major facilitator superfamily.

It localises to the vacuole membrane. In terms of biological role, probable transporter. The sequence is that of Probable transporter mch1 (mch1) from Aspergillus fumigatus (strain ATCC MYA-4609 / CBS 101355 / FGSC A1100 / Af293) (Neosartorya fumigata).